We begin with the raw amino-acid sequence, 379 residues long: Glucose-1-phosphate adenylyltransferase (379 aa).

Alpha-D-glucose 1-phosphate is bound by residues glycine 164, 179–180, and serine 190; that span reads EK.

It belongs to the bacterial/plant glucose-1-phosphate adenylyltransferase family. In terms of assembly, homotetramer.

The catalysed reaction is alpha-D-glucose 1-phosphate + ATP + H(+) = ADP-alpha-D-glucose + diphosphate. Its pathway is glycan biosynthesis; glycogen biosynthesis. Involved in the biosynthesis of ADP-glucose, a building block required for the elongation reactions to produce glycogen. Catalyzes the reaction between ATP and alpha-D-glucose 1-phosphate (G1P) to produce pyrophosphate and ADP-Glc. The chain is Glucose-1-phosphate adenylyltransferase from Lactiplantibacillus plantarum (strain ATCC BAA-793 / NCIMB 8826 / WCFS1) (Lactobacillus plantarum).